The sequence spans 894 residues: Septin and tuftelin-interacting protein 1 homolog (894 aa).

2 disordered regions span residues 71 to 149 and 187 to 225; these read YEPN…DKPV and NAGL…RSLG. A compositionally biased stretch (basic and acidic residues) spans 73–84; the sequence is PNEHKLKNKDGE. Basic residues predominate over residues 97-126; sequence KKKKKEKKEKKQKKKEKKEKKEKKNKKKNK. Residues 149-195 enclose the G-patch domain; the sequence is VGGIGAALLSKMGYKGTGGLGRDGGGMVEPIKVQVRPKNAGLASVTE. Over residues 202–217 the composition is skewed to acidic residues; sequence DDSDDSDQSEGDTDSD. The stretch at 329–449 forms a coiled coil; that stretch reads KQIDIQNQDN…SDNNDNSSLE (121 aa). The disordered stretch occupies residues 785 to 821; sequence NNNNNNNINNSYQQQNQQQPIKPISSPSLNSSNNNNI.

This sequence belongs to the TFP11/STIP family. Identified in the spliceosome C complex.

It is found in the cytoplasm. It localises to the nucleus. Its function is as follows. May be involved in pre-mRNA splicing. The sequence is that of Septin and tuftelin-interacting protein 1 homolog (stip-1) from Dictyostelium discoideum (Social amoeba).